Reading from the N-terminus, the 411-residue chain is Cytochrome P450 monooxygenase sirE (411 aa).

2 N-linked (GlcNAc...) asparagine glycosylation sites follow: N12 and N149. The helical transmembrane segment at 181–203 threads the bilayer; it reads FLNVISIFTVMMASLNVLYDILA. The N-linked (GlcNAc...) asparagine glycan is linked to N342. C352 contributes to the heme binding site.

This sequence belongs to the cytochrome P450 family. The cofactor is heme.

The protein localises to the membrane. Its pathway is mycotoxin biosynthesis. Functionally, cytochrome P450 monooxygenase; part of the gene cluster that mediates the biosynthesis of sirodesmin PL, an epipolythiodioxopiperazine (ETP) characterized by a disulfide bridged cyclic dipeptide and that acts as a phytotoxin which is involved in the blackleg didease of canola. SirD catalyzes the O-prenylation of L-tyrosine (L-Tyr) in the presence of dimethylallyl diphosphate (DMAPP) to yield 4-O-dimethylallyl-L-Tyr, and therefore represents probably the first pathway-specific enzyme in the biosynthesis of sirodesmin PL. 4-O-dimethylallyl-L-Tyr, then undergoes condensation with L-Ser in a reaction catalyzed by the non-ribosomal peptide synthase sirP to form the diketopiperazine (DKP) backbone. Further bishydroxylation of the DKP performed by the cytochrome P450 monooxygenase sirC leads to the production of the intermediate phomamide. This step is essential to form the reactive thiol group required for toxicity of sirodesmin PL. The next steps of sirodesmin biosynthesis are not well understood yet, but some predictions could be made from intermediate compounds identification. Phomamide is converted into phomalizarine via oxidation, probably by sirT. Further oxidation, methylation (by sirM or sirN) and reduction steps convert phomalizarine to deacetyl sirodesmin. Finally, acetyltransferase sirH probably acetylates deacetyl sirodesmin to produce sirodesmin PL. The polypeptide is Cytochrome P450 monooxygenase sirE (Leptosphaeria maculans (Blackleg fungus)).